Reading from the N-terminus, the 373-residue chain is D-alanine--D-alanine ligase (373 aa).

Positions 156–363 constitute an ATP-grasp domain; sequence KKLLAADGLP…YPTLLATMIE (208 aa). 184-239 serves as a coordination point for ATP; the sequence is CERLGLPVFVKPARGGSSIGVSRVSSWDQLPAAVARARRHDPKVIVEAAISGRELE. Residues aspartate 318, glutamate 330, and asparagine 332 each coordinate Mg(2+).

It belongs to the D-alanine--D-alanine ligase family. Mg(2+) is required as a cofactor. It depends on Mn(2+) as a cofactor.

It is found in the cytoplasm. The catalysed reaction is 2 D-alanine + ATP = D-alanyl-D-alanine + ADP + phosphate + H(+). Its pathway is cell wall biogenesis; peptidoglycan biosynthesis. Functionally, cell wall formation. This is D-alanine--D-alanine ligase from Mycobacterium bovis (strain BCG / Pasteur 1173P2).